Consider the following 275-residue polypeptide: Shikimate dehydrogenase (NADP(+)) (275 aa).

Shikimate contacts are provided by residues 19-21 and T66; that span reads SKS. The active-site Proton acceptor is K70. E82 provides a ligand contact to NADP(+). Shikimate-binding residues include N91 and D106. Residues 130-134, 154-159, and M217 contribute to the NADP(+) site; these read GAGGA and NRTASK. Shikimate is bound at residue Y219. G241 contributes to the NADP(+) binding site.

The protein belongs to the shikimate dehydrogenase family. As to quaternary structure, homodimer.

The enzyme catalyses shikimate + NADP(+) = 3-dehydroshikimate + NADPH + H(+). The protein operates within metabolic intermediate biosynthesis; chorismate biosynthesis; chorismate from D-erythrose 4-phosphate and phosphoenolpyruvate: step 4/7. In terms of biological role, involved in the biosynthesis of the chorismate, which leads to the biosynthesis of aromatic amino acids. Catalyzes the reversible NADPH linked reduction of 3-dehydroshikimate (DHSA) to yield shikimate (SA). The chain is Shikimate dehydrogenase (NADP(+)) from Colwellia psychrerythraea (strain 34H / ATCC BAA-681) (Vibrio psychroerythus).